We begin with the raw amino-acid sequence, 300 residues long: GTPase Era (300 aa).

In terms of domain architecture, Era-type G spans 7 to 175 (KSGFAVMAGL…KTAVAETLPF (169 aa)). The interval 15–22 (GLPNAGKS) is G1. 15-22 (GLPNAGKS) provides a ligand contact to GTP. The segment at 41–45 (QMTRQ) is G2. Residues 62–65 (DTPG) form a G3 region. GTP contacts are provided by residues 62–66 (DTPGF) and 124–127 (NKAD). The tract at residues 124–127 (NKAD) is G4. The interval 154-156 (ISA) is G5. One can recognise a KH type-2 domain in the interval 198–283 (IREQIFNLYE…RLELEVSVEP (86 aa)).

This sequence belongs to the TRAFAC class TrmE-Era-EngA-EngB-Septin-like GTPase superfamily. Era GTPase family. As to quaternary structure, monomer.

It localises to the cytoplasm. It is found in the cell inner membrane. In terms of biological role, an essential GTPase that binds both GDP and GTP, with rapid nucleotide exchange. Plays a role in 16S rRNA processing and 30S ribosomal subunit biogenesis and possibly also in cell cycle regulation and energy metabolism. The chain is GTPase Era from Elusimicrobium minutum (strain Pei191).